The following is a 207-amino-acid chain: MMHQIYSCSDENIEVFTTVIPSKVSSPARRRAKSSQHLLTKNVVIESDLYTHQPLELLPHRGDRRDPGDRRRFGRLQTARPPTAHPAKASARPVGISEPKTSNLCGNRAYGKSLIPPVPRISVKTSASASLEATAMGTEKGAVLMRGSRHLKKMTEEYPALPQGAEASLPLTGSASCGVPGILRKMWTRHKKKSEYVGATNSAFEAD.

The tract at residues 56-100 (ELLPHRGDRRDPGDRRRFGRLQTARPPTAHPAKASARPVGISEPK) is disordered. Over residues 58 to 71 (LPHRGDRRDPGDRR) the composition is skewed to basic and acidic residues.

This sequence belongs to the vexin family.

It localises to the cell membrane. It is found in the nucleus. In terms of biological role, required for neurogenesis in the neural plate and retina. Strongly cooperates with neural bHLH factors to promote neurogenesis. The sequence is that of Vexin from Homo sapiens (Human).